Reading from the N-terminus, the 344-residue chain is N-acetyl-gamma-glutamyl-phosphate reductase (344 aa).

Cys-150 is a catalytic residue.

Belongs to the NAGSA dehydrogenase family. Type 1 subfamily.

It is found in the cytoplasm. The enzyme catalyses N-acetyl-L-glutamate 5-semialdehyde + phosphate + NADP(+) = N-acetyl-L-glutamyl 5-phosphate + NADPH + H(+). It functions in the pathway amino-acid biosynthesis; L-arginine biosynthesis; N(2)-acetyl-L-ornithine from L-glutamate: step 3/4. Catalyzes the NADPH-dependent reduction of N-acetyl-5-glutamyl phosphate to yield N-acetyl-L-glutamate 5-semialdehyde. In Pseudomonas entomophila (strain L48), this protein is N-acetyl-gamma-glutamyl-phosphate reductase.